The sequence spans 500 residues: Maturase K (500 aa).

The protein belongs to the intron maturase 2 family. MatK subfamily.

The protein localises to the plastid. Its subcellular location is the chloroplast. Functionally, usually encoded in the trnK tRNA gene intron. Probably assists in splicing its own and other chloroplast group II introns. This chain is Maturase K, found in Adiantum capillus-veneris (Maidenhair fern).